The sequence spans 209 residues: Abscisic acid receptor PYL3 (209 aa).

The disordered stretch occupies residues 1–23 (MNLAPIHDPSSSSTTTTSSSTPY). The segment covering 10 to 21 (SSSSTTTTSSST) has biased composition (low complexity). Positions 43 to 205 (FPRSPNTCTS…NLQNLAVIST (163 aa)) are START-like. Abscisate-binding positions include Lys79, 113–118 (ASTSVE), 140–146 (RLNNYRS), and Glu170. Positions 109 to 113 (SGLPA) match the Gate loop motif. The short motif at 139–141 (HRL) is the Latch loop element.

Belongs to the PYR/PYL/RCAR abscisic acid intracellular receptor family. In terms of assembly, homodimer and monomer. Binds ABA on one subunit only. ABA-binding favors monomer and trans-homodimer intermediate, and increases PP2C inhibitor activity. Binds both (-)-ABA and (+)-ABA. Binds to CARs protein in an ABA-independent manner, both at the plasma membrane and in the nucleus. Interacts with HAB1, ABI1 and ABI2, and possibly with other PP2Cs.

It localises to the cytoplasm. The protein resides in the nucleus. The protein localises to the cell membrane. Its function is as follows. Receptor for abscisic acid (ABA) required for ABA-mediated responses such as stomatal closure and germination inhibition. Inhibits the activity of group-A protein phosphatases type 2C (PP2Cs) when activated by ABA. Can be activated by both (-)-ABA and (+)-ABA. The chain is Abscisic acid receptor PYL3 (PYL3) from Arabidopsis thaliana (Mouse-ear cress).